The chain runs to 580 residues: Type II methyltransferase M.BanIII (580 aa).

This sequence belongs to the N(4)/N(6)-methyltransferase family.

The catalysed reaction is a 2'-deoxyadenosine in DNA + S-adenosyl-L-methionine = an N(6)-methyl-2'-deoxyadenosine in DNA + S-adenosyl-L-homocysteine + H(+). In terms of biological role, a gamma subtype methylase, recognizes the double-stranded sequence 5'-ATCGAT-3', methylates A-5 on both strands, and protects the DNA from cleavage by the BanIII endonuclease. The protein is Type II methyltransferase M.BanIII (banIIIM) of Aneurinibacillus aneurinilyticus (Bacillus aneurinolyticus).